The following is a 387-amino-acid chain: Acyl-CoA dehydrogenase FadE29 (387 aa).

FAD contacts are provided by residues 123–126, Thr-132, and Thr-158; that span reads IGYT. Glu-241 (proton acceptor) is an active-site residue. 367 to 369 contributes to the FAD binding site; sequence VNE.

The protein belongs to the acyl-CoA dehydrogenase family. In terms of assembly, heterotetramer composed of FadE28 and FadE29. FAD is required as a cofactor.

The enzyme catalyses 3-oxochol-4-en-22-oyl-CoA + A = 3-oxochola-4,17-dien-22-oyl-CoA + AH2. It functions in the pathway steroid metabolism; cholesterol degradation. In terms of biological role, involved in the third cycle of side chain dehydrogenation in the beta-oxidation of cholesterol catabolism. Contributes partly to the virulence by increasing the efficiency of beta-oxidation. Catalyzes the dehydrogenation of 2'-propanoyl-CoA ester side chains of 3-oxo-4-pregnene-20-carboxyl-CoA (3-OPC-CoA) to yield 3-oxo-4,17-pregnadiene-20-carboxyl-CoA (3-OPDC-CoA). Also able to dehydrogenate steroyl-CoA such as 3-oxo-chol-4-en-24-oyl-CoA (3-OCO-CoA), 1beta-(2'-propanoyl-CoA)-3a-alpha-H- 7a-beta-methylhexahydro-4-indanone (indanone-CoA ester), hexahydroindanone and pregenenone. The chain is Acyl-CoA dehydrogenase FadE29 (fadE29) from Mycobacterium tuberculosis (strain ATCC 25618 / H37Rv).